Reading from the N-terminus, the 365-residue chain is Flagellar P-ring protein (365 aa).

Positions 1–19 (MMLSLCAIAGLLLAPSIQA) are cleaved as a signal peptide.

The protein belongs to the FlgI family. In terms of assembly, the basal body constitutes a major portion of the flagellar organelle and consists of four rings (L,P,S, and M) mounted on a central rod.

The protein localises to the periplasm. Its subcellular location is the bacterial flagellum basal body. Its function is as follows. Assembles around the rod to form the L-ring and probably protects the motor/basal body from shearing forces during rotation. The chain is Flagellar P-ring protein from Sodalis glossinidius (strain morsitans).